Consider the following 1161-residue polypeptide: Auxin response factor 19 (1161 aa).

The interval 1–20 (MMKQAQQQPPPPPASSAATT) is disordered. Positions 154-256 (FCKTLTASDT…QLLLGIRRAN (103 aa)) form a DNA-binding region, TF-B3. A disordered region spans residues 573–598 (NQMQQQHASSTQGQQPATSQPLLLPQ). The PB1 domain maps to 1027-1111 (RTFTKVYKRG…KCIRILSPQE (85 aa)).

Belongs to the ARF family. Homodimers and heterodimers. In terms of tissue distribution, expressed in roots, culms, leaves and young panicles.

It is found in the nucleus. Functionally, auxin response factors (ARFs) are transcriptional factors that bind specifically to the DNA sequence 5'-TGTCTC-3' found in the auxin-responsive promoter elements (AuxREs). The sequence is that of Auxin response factor 19 (ARF19) from Oryza sativa subsp. japonica (Rice).